The following is a 901-amino-acid chain: Protein translocase subunit SecA (901 aa).

Residues Gln-85, 103 to 107 (GEGKT), and Asp-510 each bind ATP. Residues 848-901 (RINQNNLPVDENSQTTQNSETEDYSDRRIGRNEPCPCGSGKKYKHCHGSRVARQ) are disordered. Positions 849–866 (INQNNLPVDENSQTTQNS) are enriched in polar residues. Cys-882, Cys-884, Cys-893, and His-894 together coordinate Zn(2+). The segment covering 888-901 (KKYKHCHGSRVARQ) has biased composition (basic residues).

It belongs to the SecA family. Monomer and homodimer. Part of the essential Sec protein translocation apparatus which comprises SecA, SecYEG and auxiliary proteins SecDF-YajC and YidC. It depends on Zn(2+) as a cofactor.

The protein localises to the cell inner membrane. It is found in the cytoplasm. The enzyme catalyses ATP + H2O + cellular proteinSide 1 = ADP + phosphate + cellular proteinSide 2.. Part of the Sec protein translocase complex. Interacts with the SecYEG preprotein conducting channel. Has a central role in coupling the hydrolysis of ATP to the transfer of proteins into and across the cell membrane, serving both as a receptor for the preprotein-SecB complex and as an ATP-driven molecular motor driving the stepwise translocation of polypeptide chains across the membrane. This chain is Protein translocase subunit SecA, found in Haemophilus influenzae (strain 86-028NP).